Here is a 223-residue protein sequence, read N- to C-terminus: MSILNFNKLIDHTNLKANATYEEIERLCHEAIEYGFFSVCVNPAYIRTAKKILLKSPVKVCTVVDFPLGQTFSEQKVYEAKTSIKMGADEIDMVINIPELINGCACVIDEIRQVKKVCGEKILKVIVETALLNEEQIRKATLACIDGGADFIKTSTGFSTRGASLNDIKIMQQASQNKILIKASGGISTARELIEFVKVGADRIGTSRSVKLMQELKTMDLAK.

Aspartate 92 functions as the Proton donor/acceptor in the catalytic mechanism. Catalysis depends on lysine 153, which acts as the Schiff-base intermediate with acetaldehyde. Lysine 182 (proton donor/acceptor) is an active-site residue.

Belongs to the DeoC/FbaB aldolase family. DeoC type 1 subfamily.

The protein localises to the cytoplasm. It catalyses the reaction 2-deoxy-D-ribose 5-phosphate = D-glyceraldehyde 3-phosphate + acetaldehyde. It functions in the pathway carbohydrate degradation; 2-deoxy-D-ribose 1-phosphate degradation; D-glyceraldehyde 3-phosphate and acetaldehyde from 2-deoxy-alpha-D-ribose 1-phosphate: step 2/2. Catalyzes a reversible aldol reaction between acetaldehyde and D-glyceraldehyde 3-phosphate to generate 2-deoxy-D-ribose 5-phosphate. The polypeptide is Deoxyribose-phosphate aldolase (Mycoplasmoides gallisepticum (strain R(low / passage 15 / clone 2)) (Mycoplasma gallisepticum)).